We begin with the raw amino-acid sequence, 323 residues long: MKKTLIILTVLLLSVLTAACSSSSGNQNSKEHKVAVTHDLGKTNVPEHPKRVVVLELGFIDTLLDLGITPVGVADDNKAKQLINKDVLKKIDGYTSVGTRSQPSMEKIASLKPDLIIADTTRHKKVYDQLKKIAPTIALNNLNADYQDTIDASLTIAKAVGKEKEMEKKLTAHEEKLSETKQKISANSQSVLLIGNTNDTIMARDENFFTSRLLTQVGYRYAISTSGNSDSSNGGDSVNMKMTLEQLLKTDPDVIILMTGKTDDLDADGKRPIEKNVLWKKLKAVKNGHVYHVDRAVWSLRRSVDGANAILDELQKEMPAAKK.

A signal peptide spans 1-19 (MKKTLIILTVLLLSVLTAA). Residue cysteine 20 is the site of N-palmitoyl cysteine attachment. A lipid anchor (S-diacylglycerol cysteine) is attached at cysteine 20. The Fe/B12 periplasmic-binding domain occupies 51-322 (RVVVLELGFI…ELQKEMPAAK (272 aa)).

The protein belongs to the bacterial solute-binding protein 8 family. In terms of assembly, interacts with FloT.

Its subcellular location is the cell membrane. It localises to the membrane raft. The chain is Putative ABC transporter substrate-binding lipoprotein YhfQ (yhfQ) from Bacillus subtilis (strain 168).